The primary structure comprises 389 residues: MKFRQKHEDFIVNEILEYELNDYGNYFLYKLQKNGIENLKAISYLSKNFEVPTKEIGYCGLKDRHAITTQYVSIPKEYGKLSLDEDNLKLEYVGTIEKPLKIGRLYGNRFEIIARAVDKDEFLKIADNIRNLSSGAPNYYDDQRFGSVFNGKFIAKEILKGNYEEVVKILLTSYTKSEKKQLKDLKRFIAKNWGNWDECLEYIDKKQIRSKMFRNMVKSLTYENDFKKAFKYVDNRLKELFISAYQSYLWNECLKEFLKEVIPKENRIYVDYSCGTFLFYENIEEELFDKLKEMDFPTIVSDVEYTDPEKRIIKAILKKERIKISDFEKLDFGKLKYTKRPIISIPEDVNTGKFKSDELNSKKYKIDLEFSLKKGSYATIILKRVFNIL.

The active-site Nucleophile is the D63. One can recognise a TRUD domain in the interval G135 to I345.

This sequence belongs to the pseudouridine synthase TruD family.

It carries out the reaction uridine(13) in tRNA = pseudouridine(13) in tRNA. In terms of biological role, could be responsible for synthesis of pseudouridine from uracil-13 in transfer RNAs. This is Probable tRNA pseudouridine synthase D 1 (truD1) from Methanococcus maripaludis (strain DSM 14266 / JCM 13030 / NBRC 101832 / S2 / LL).